The sequence spans 421 residues: Histidine--tRNA ligase (421 aa).

The protein belongs to the class-II aminoacyl-tRNA synthetase family. In terms of assembly, homodimer.

The protein resides in the cytoplasm. The enzyme catalyses tRNA(His) + L-histidine + ATP = L-histidyl-tRNA(His) + AMP + diphosphate + H(+). The polypeptide is Histidine--tRNA ligase (Francisella tularensis subsp. mediasiatica (strain FSC147)).